The sequence spans 958 residues: Glycine dehydrogenase (decarboxylating) (958 aa).

The residue at position 707 (K707) is an N6-(pyridoxal phosphate)lysine.

The protein belongs to the GcvP family. The glycine cleavage system is composed of four proteins: P, T, L and H. Requires pyridoxal 5'-phosphate as cofactor.

The catalysed reaction is N(6)-[(R)-lipoyl]-L-lysyl-[glycine-cleavage complex H protein] + glycine + H(+) = N(6)-[(R)-S(8)-aminomethyldihydrolipoyl]-L-lysyl-[glycine-cleavage complex H protein] + CO2. Its function is as follows. The glycine cleavage system catalyzes the degradation of glycine. The P protein binds the alpha-amino group of glycine through its pyridoxal phosphate cofactor; CO(2) is released and the remaining methylamine moiety is then transferred to the lipoamide cofactor of the H protein. The polypeptide is Glycine dehydrogenase (decarboxylating) (Stutzerimonas stutzeri (strain A1501) (Pseudomonas stutzeri)).